Reading from the N-terminus, the 248-residue chain is Peptidyl-prolyl cis-trans isomerase, chloroplastic (248 aa).

Residues 85-243 (FFDIEIGGES…KPCKIAKSGE (159 aa)) enclose the PPIase cyclophilin-type domain. The disordered stretch occupies residues 223–248 (QETSKLDNSPKKPCKIAKSGELPLDG).

This sequence belongs to the cyclophilin-type PPIase family. In terms of tissue distribution, highly expressed in leaf.

The protein localises to the plastid. The protein resides in the chloroplast stroma. It carries out the reaction [protein]-peptidylproline (omega=180) = [protein]-peptidylproline (omega=0). With respect to regulation, binds cyclosporin A (CsA). CsA mediates some of its effects via an inhibitory action on PPIase. Functionally, PPIases accelerate the folding of proteins. It catalyzes the cis-trans isomerization of proline imidic peptide bonds in oligopeptides. In Vicia faba (Broad bean), this protein is Peptidyl-prolyl cis-trans isomerase, chloroplastic.